Reading from the N-terminus, the 448-residue chain is MILGTPKADWLAEFPRLADLIALRPSEWFNPAIAPSAEALADVGLGAADVADASARLQRFAPLIARLFPETAGSGGIIESDLVEVADFHDALRQHYAAELPGRLWLKRDSHLPISGSIKARGGIYEVLAHAERLALENGLVGLDDDYSRLAEPDCRAFFAGHRIAVGSTGNLGLSIGIIGAALGFQASVHMSADARQWKKDKLRAHGVTVVEYASDYSVAVEQGRREAAGDPYTHFVDDENSRDLFLGYAVAAERLRGQLDAAGIRVDSEHPLFVHLPCGVGGGPGGVAFGLKLAFGDAVHCLFAEPTHSPCMFLGVYTGRHEQVSVQDFGIDNRTAADGLAVGRPSGFVGRAMQRLLDGYYTVDDDELFRLLALLERSQGIRLEPSALAGAPGIARVTREPQGYRERMGLTSARLANATHLVWATGGGMVPEAEMHAYLERGRALLD.

The residue at position 119 (lysine 119) is an N6-(pyridoxal phosphate)lysine.

It belongs to the serine/threonine dehydratase family. DsdA subfamily. Requires pyridoxal 5'-phosphate as cofactor.

The catalysed reaction is D-serine = pyruvate + NH4(+). The chain is Probable D-serine dehydratase from Pseudomonas paraeruginosa (strain DSM 24068 / PA7) (Pseudomonas aeruginosa (strain PA7)).